A 106-amino-acid polypeptide reads, in one-letter code: MIPGEYKVKPGYIELNIGRATCSIIVENHGDRPIQVGSHYHFAEVNPALKFDRQKARGYRLNIAAGTAVRFEPGQKREVELVALSGARIVHGFRGDIMGELEANDE.

Belongs to the urease beta subunit family. Heterotrimer of UreA (gamma), UreB (beta) and UreC (alpha) subunits. Three heterotrimers associate to form the active enzyme.

It is found in the cytoplasm. It catalyses the reaction urea + 2 H2O + H(+) = hydrogencarbonate + 2 NH4(+). The protein operates within nitrogen metabolism; urea degradation; CO(2) and NH(3) from urea (urease route): step 1/1. The sequence is that of Urease subunit beta from Escherichia coli O157:H7.